The following is a 149-amino-acid chain: 16.9 kDa class I heat shock protein 3 (149 aa).

The region spanning 35–149 is the sHSP domain; it reads DTAAFANARV…PEVKAIEISG (115 aa).

Belongs to the small heat shock protein (HSP20) family. May form oligomeric structures.

Its subcellular location is the cytoplasm. This chain is 16.9 kDa class I heat shock protein 3 (HSP16.9C), found in Oryza sativa subsp. japonica (Rice).